A 374-amino-acid polypeptide reads, in one-letter code: Alanine racemase (374 aa).

The Proton acceptor; specific for D-alanine role is filled by lysine 34. Position 34 is an N6-(pyridoxal phosphate)lysine (lysine 34). Arginine 147 provides a ligand contact to substrate. The active-site Proton acceptor; specific for L-alanine is tyrosine 271. Position 319 (methionine 319) interacts with substrate.

This sequence belongs to the alanine racemase family. Requires pyridoxal 5'-phosphate as cofactor.

It carries out the reaction L-alanine = D-alanine. The protein operates within amino-acid biosynthesis; D-alanine biosynthesis; D-alanine from L-alanine: step 1/1. Functionally, catalyzes the interconversion of L-alanine and D-alanine. May also act on other amino acids. This is Alanine racemase (alr) from Actinobacillus pleuropneumoniae serotype 5b (strain L20).